The sequence spans 354 residues: Ephrin-4 (354 aa).

Residues 1-22 form the signal peptide; sequence MKRPLDFLLAICLILLRSSTFA. Residues 23 to 173 enclose the Ephrin RBD domain; the sequence is DEHTVHWNST…SKNMRLSMKV (151 aa). An N-linked (GlcNAc...) asparagine glycan is attached at Asn-30. 2 disulfides stabilise this stretch: Cys-55-Cys-92 and Cys-80-Cys-162. The interval 173–196 is disordered; it reads VLSSQPTPSPSSKPARSRTDARRQ. Low complexity predominate over residues 175–186; it reads SSQPTPSPSSKP. A lipid anchor (GPI-anchor amidated serine) is attached at Ser-335. Positions 336-354 are cleaved as a propeptide — removed in mature form; the sequence is SSSLPTFLIVFLIAVNLLF.

It belongs to the ephrin family. In terms of processing, may undergo proteolysis by metalloprotease sup-17 to give rise to a soluble form.

It is found in the cell membrane. Its function is as follows. Regulates the formation or stabilization of cell-cell contacts at several stages of epithelial morphogenesis. In early embryonic development, involved in ventral closure of the epidermis. During male tail morphogenesis, regulates precursor cell sorting together with mab-20 and allows the formation of distinct sensory rays. Probably acts as a ligand for lad-2 to regulate axon guidance of several neurons including SDQL, SDQR, SMD and PLN neurons during neurogenesis. This chain is Ephrin-4 (efn-4), found in Caenorhabditis briggsae.